The following is an 85-amino-acid chain: ATP synthase epsilon chain (85 aa).

It belongs to the ATPase epsilon chain family. In terms of assembly, F-type ATPases have 2 components, CF(1) - the catalytic core - and CF(0) - the membrane proton channel. CF(1) has five subunits: alpha(3), beta(3), gamma(1), delta(1), epsilon(1). CF(0) has three main subunits: a, b and c.

It is found in the cell membrane. In terms of biological role, produces ATP from ADP in the presence of a proton gradient across the membrane. The sequence is that of ATP synthase epsilon chain from Frankia casuarinae (strain DSM 45818 / CECT 9043 / HFP020203 / CcI3).